Consider the following 281-residue polypeptide: Protein ZAR1-like 1.S (281 aa).

The 3CxxC-type zinc-finger motif lies at Gln-183–Gln-267.

Belongs to the ZAR1 family. In terms of assembly, component of a cytoplasmic ribonucleoprotein complex together with eif4enif1/4E-T and cpeb1. Expressed in oocytes.

The protein resides in the cytoplasm. It is found in the cytoplasmic ribonucleoprotein granule. In terms of biological role, mRNA-binding protein required for maternal mRNA storage, translation and degradation during oocyte maturation. Controls timing of meiosis during oogenesis. Probably promotes formation of some phase-separated membraneless compartment that stores maternal mRNAs in oocytes: acts by undergoing liquid-liquid phase separation upon binding to maternal mRNAs. Binds to the 3'-UTR of maternal mRNAs, inhibiting their translation. This Xenopus laevis (African clawed frog) protein is Protein ZAR1-like 1.S.